A 916-amino-acid chain; its full sequence is Protein translocase subunit SecA (916 aa).

ATP contacts are provided by residues glutamine 87, 105 to 109 (GEGKT), and aspartate 507. Cysteine 900, cysteine 902, cysteine 911, and histidine 912 together coordinate Zn(2+).

The protein belongs to the SecA family. In terms of assembly, monomer and homodimer. Part of the essential Sec protein translocation apparatus which comprises SecA, SecYEG and auxiliary proteins SecDF-YajC and YidC. It depends on Zn(2+) as a cofactor.

The protein resides in the cell inner membrane. It localises to the cytoplasm. The catalysed reaction is ATP + H2O + cellular proteinSide 1 = ADP + phosphate + cellular proteinSide 2.. In terms of biological role, part of the Sec protein translocase complex. Interacts with the SecYEG preprotein conducting channel. Has a central role in coupling the hydrolysis of ATP to the transfer of proteins into and across the cell membrane, serving both as a receptor for the preprotein-SecB complex and as an ATP-driven molecular motor driving the stepwise translocation of polypeptide chains across the membrane. This is Protein translocase subunit SecA from Neisseria meningitidis serogroup A / serotype 4A (strain DSM 15465 / Z2491).